Here is a 509-residue protein sequence, read N- to C-terminus: Transmembrane protein 180 (509 aa).

Over 1–10 (MGLRLLACLF) the chain is Extracellular. Residues 11–42 (HLPTAVIYGSLSLFVSILHNVFLLYYVDTFVS) traverse the membrane as a helical segment. At 43–54 (VYKIDKLSFWIG) the chain is on the cytoplasmic side. The chain crosses the membrane as a helical span at residues 55 to 73 (ETVFLIWNSLNDPLFGWLS). Topologically, residues 74–98 (DRVFLSTQQPGAEISSPEVVLKRLR) are extracellular. Residues 99–116 (ALSHNGPLFAISFLAFWV) traverse the membrane as a helical segment. The Cytoplasmic portion of the chain corresponds to 117 to 124 (AWAHPGLQ). Residues 125-149 (FLLCLCMYDSFLTMVDLHHNALLAD) form a helical membrane-spanning segment. The Extracellular portion of the chain corresponds to 150-153 (LAVS). Residues 154-177 (AKDRTSLNFYCSFFSAIGSLSVFM) traverse the membrane as a helical segment. Residues 178-189 (SYAVWNKEDFFS) are Cytoplasmic-facing. The chain crosses the membrane as a helical span at residues 190–221 (FRIFCIVLAFCSIVGFTLSTQLLRQRFETDGK). Residues 222-259 (AKWDQESTLKELYIEKLSVPQEKRITLVEYLQQLSRHR) lie on the Extracellular side of the membrane. Residues 260 to 287 (NFLWFVCMNLIQVFHCHFNSNFFPLFLE) form a helical membrane-spanning segment. The Cytoplasmic portion of the chain corresponds to 288–300 (HLLSDKISVSTGS). The chain crosses the membrane as a helical span at residues 301–320 (FLLGISYIAPHLNNLYFLSL). The Extracellular segment spans residues 321–325 (CRRWG). A helical membrane pass occupies residues 326-345 (VYAVVRGLFFLKLALSVVML). Residues 346–353 (LAGPDQVY) are Cytoplasmic-facing. A helical transmembrane segment spans residues 354-388 (LLCIFIASNRVFTEGTCKLLNLVVTDLVDEDLVLN). Over 389 to 397 (RRKQAASAL) the chain is Extracellular. Residues 398–424 (LFGMVALVTKPGQTFAPLIGTWLLCVY) form a helical membrane-spanning segment. At 425 to 458 (TGYDIFQRNPLSNVVSAQPKLESDTILEPTLRQG) the chain is on the cytoplasmic side. The chain crosses the membrane as a helical span at residues 459-477 (CFYLLVFVPITCALLQLLS). Topologically, residues 478–509 (WTQFSLHGKRLQMVKAQRQGLMQGRAPEIKMI) are extracellular.

It is found in the cell membrane. In Gallus gallus (Chicken), this protein is Transmembrane protein 180.